The primary structure comprises 425 residues: Serine--tRNA ligase (425 aa).

An L-serine-binding site is contributed by Thr230–Glu232. Residue Arg261 to Glu263 participates in ATP binding. Glu284 contributes to the L-serine binding site. Glu348–Ser351 serves as a coordination point for ATP. Ser384 is an L-serine binding site.

It belongs to the class-II aminoacyl-tRNA synthetase family. Type-1 seryl-tRNA synthetase subfamily. Homodimer. The tRNA molecule binds across the dimer.

Its subcellular location is the cytoplasm. It carries out the reaction tRNA(Ser) + L-serine + ATP = L-seryl-tRNA(Ser) + AMP + diphosphate + H(+). The catalysed reaction is tRNA(Sec) + L-serine + ATP = L-seryl-tRNA(Sec) + AMP + diphosphate + H(+). The protein operates within aminoacyl-tRNA biosynthesis; selenocysteinyl-tRNA(Sec) biosynthesis; L-seryl-tRNA(Sec) from L-serine and tRNA(Sec): step 1/1. Its function is as follows. Catalyzes the attachment of serine to tRNA(Ser). Is also able to aminoacylate tRNA(Sec) with serine, to form the misacylated tRNA L-seryl-tRNA(Sec), which will be further converted into selenocysteinyl-tRNA(Sec). This chain is Serine--tRNA ligase, found in Streptococcus equi subsp. zooepidemicus (strain MGCS10565).